Reading from the N-terminus, the 77-residue chain is MKADIHPAYETIEVTCSCGNKFETRSNLCKPLGTDVCNECHPFYTGKQKTLDTGGRVQRFADRFGAFGKKPAATPAE.

Zn(2+) contacts are provided by Cys-16, Cys-18, Cys-37, and Cys-40.

This sequence belongs to the bacterial ribosomal protein bL31 family. Type A subfamily. As to quaternary structure, part of the 50S ribosomal subunit. The cofactor is Zn(2+).

Binds the 23S rRNA. The chain is Large ribosomal subunit protein bL31 from Pseudomonas fluorescens (strain SBW25).